A 293-amino-acid polypeptide reads, in one-letter code: Ribosomal protein L11 methyltransferase (293 aa).

Positions 145, 166, 188, and 230 each coordinate S-adenosyl-L-methionine.

Belongs to the methyltransferase superfamily. PrmA family.

It localises to the cytoplasm. The catalysed reaction is L-lysyl-[protein] + 3 S-adenosyl-L-methionine = N(6),N(6),N(6)-trimethyl-L-lysyl-[protein] + 3 S-adenosyl-L-homocysteine + 3 H(+). Functionally, methylates ribosomal protein L11. The polypeptide is Ribosomal protein L11 methyltransferase (Klebsiella pneumoniae subsp. pneumoniae (strain ATCC 700721 / MGH 78578)).